The primary structure comprises 404 residues: DNA gyrase subunit B (404 aa).

The Toprim domain occupies 321–404 (SEIYIVEGDS…VIIMTDADVD (84 aa)). 3 residues coordinate Mg(2+): glutamate 327, aspartate 400, and aspartate 402.

The protein belongs to the type II topoisomerase GyrB family. Heterotetramer, composed of two GyrA and two GyrB chains. In the heterotetramer, GyrA contains the active site tyrosine that forms a transient covalent intermediate with DNA, while GyrB binds cofactors and catalyzes ATP hydrolysis. It depends on Mg(2+) as a cofactor. Mn(2+) is required as a cofactor. Ca(2+) serves as cofactor.

It localises to the cytoplasm. It carries out the reaction ATP-dependent breakage, passage and rejoining of double-stranded DNA.. Functionally, a type II topoisomerase that negatively supercoils closed circular double-stranded (ds) DNA in an ATP-dependent manner to modulate DNA topology and maintain chromosomes in an underwound state. Negative supercoiling favors strand separation, and DNA replication, transcription, recombination and repair, all of which involve strand separation. Also able to catalyze the interconversion of other topological isomers of dsDNA rings, including catenanes and knotted rings. Type II topoisomerases break and join 2 DNA strands simultaneously in an ATP-dependent manner. The sequence is that of DNA gyrase subunit B (gyrB) from Bacillus mycoides.